Reading from the N-terminus, the 235-residue chain is Uridylate kinase (235 aa).

9-12 (KLSG) lines the ATP pocket. Gly-51 lines the UMP pocket. ATP-binding residues include Gly-52 and Arg-56. UMP is bound by residues Asp-71 and 132–139 (TGNPYFTT). ATP is bound by residues Thr-159, Tyr-165, and Asp-168.

This sequence belongs to the UMP kinase family. In terms of assembly, homohexamer.

The protein localises to the cytoplasm. The enzyme catalyses UMP + ATP = UDP + ADP. The protein operates within pyrimidine metabolism; CTP biosynthesis via de novo pathway; UDP from UMP (UMPK route): step 1/1. With respect to regulation, inhibited by UTP. In terms of biological role, catalyzes the reversible phosphorylation of UMP to UDP. This chain is Uridylate kinase, found in Christiangramia forsetii (strain DSM 17595 / CGMCC 1.15422 / KT0803) (Gramella forsetii).